The following is a 350-amino-acid chain: Formimidoylglutamase (350 aa).

Mn(2+) is bound by residues H130, D165, H167, D169, D269, and D271.

This sequence belongs to the arginase family. Mn(2+) serves as cofactor.

The enzyme catalyses N-formimidoyl-L-glutamate + H2O = formamide + L-glutamate. Its pathway is amino-acid degradation; L-histidine degradation into L-glutamate; L-glutamate from N-formimidoyl-L-glutamate (hydrolase route): step 1/1. In terms of biological role, catalyzes the conversion of N-formimidoyl-L-glutamate to L-glutamate and formamide. This is Formimidoylglutamase from Aliivibrio fischeri (strain ATCC 700601 / ES114) (Vibrio fischeri).